The sequence spans 266 residues: Chymotrypsin-like elastase family member 1 (266 aa).

An N-terminal signal peptide occupies residues 1–16; that stretch reads MLRFLVFASLVLYGHS. A propeptide spans 17–26 (activation peptide); that stretch reads TQDFPETNAR. The Peptidase S1 domain occupies 27-264; the sequence is VVGGAEARRN…YISWMNNVIA (238 aa). Cys-56 and Cys-72 form a disulfide bridge. Residue His-71 is the Charge relay system of the active site. Asp-85, Asn-87, Gln-90, and Glu-95 together coordinate Ca(2+). Asp-119 acts as the Charge relay system in catalysis. Disulfide bonds link Cys-153–Cys-220, Cys-184–Cys-200, and Cys-210–Cys-240. The Charge relay system role is filled by Ser-214.

The protein belongs to the peptidase S1 family. Elastase subfamily. Requires Ca(2+) as cofactor. As to expression, pancreas.

It localises to the secreted. The enzyme catalyses Hydrolysis of proteins, including elastin. Preferential cleavage: Ala-|-Xaa.. In terms of biological role, serine proteases that hydrolyze many proteins in addition to elastin. The polypeptide is Chymotrypsin-like elastase family member 1 (Cela1) (Rattus norvegicus (Rat)).